An 850-amino-acid polypeptide reads, in one-letter code: cAMP-inducible prespore protein D7 (850 aa).

The signal sequence occupies residues 1–24; sequence MYSKKYTSFVIVLILSCIISTCTS. Positions 119–130 are enriched in low complexity; sequence QNNNIGSSIGDS. Disordered stretches follow at residues 119 to 167 and 787 to 850; these read QNNN…SKTT and DAEL…QNQK. Residues 131 to 143 show a composition bias toward polar residues; it reads TGASTSPQFQSIN. The span at 144–154 shows a compositional bias: low complexity; it reads GLSGASQSSGS. A compositionally biased stretch (basic and acidic residues) spans 787 to 798; sequence DAELAKNNKQEN. A compositionally biased stretch (polar residues) spans 801-820; it reads ENLVQEKQQSPDQIKNQLKN. Residues 837 to 850 are compositionally biased toward low complexity; the sequence is EKNQQLLEQEQNQK.

The protein is cAMP-inducible prespore protein D7 (D7) of Dictyostelium discoideum (Social amoeba).